The following is a 208-amino-acid chain: Redox-sensing transcriptional repressor Rex 1 (208 aa).

The segment at residues 15–54 is a DNA-binding region (H-T-H motif); the sequence is SYYMCLERLLDEGVEVVSSEELARRLDLKASQIRKDLSYF. 89-94 provides a ligand contact to NAD(+); sequence GAGNIG.

This sequence belongs to the transcriptional regulatory Rex family. Homodimer.

The protein resides in the cytoplasm. In terms of biological role, modulates transcription in response to changes in cellular NADH/NAD(+) redox state. The polypeptide is Redox-sensing transcriptional repressor Rex 1 (Thermotoga maritima (strain ATCC 43589 / DSM 3109 / JCM 10099 / NBRC 100826 / MSB8)).